The chain runs to 301 residues: Oxygen-dependent coproporphyrinogen-III oxidase (301 aa).

The important for dimerization stretch occupies residues 49–58 (VMVDGAVIEK). S93 is a binding site for substrate. Catalysis depends on H107, which acts as the Proton donor. Residues 109 to 111 (NVR) and 259 to 261 (GGR) each bind substrate. Residues 241 to 276 (YAEFNLVIDRGTKFGLQSGGRTESILISLPPRARWG) are important for dimerization.

Belongs to the aerobic coproporphyrinogen-III oxidase family. In terms of assembly, homodimer.

The protein resides in the cytoplasm. It carries out the reaction coproporphyrinogen III + O2 + 2 H(+) = protoporphyrinogen IX + 2 CO2 + 2 H2O. It participates in porphyrin-containing compound metabolism; protoporphyrin-IX biosynthesis; protoporphyrinogen-IX from coproporphyrinogen-III (O2 route): step 1/1. Involved in the heme biosynthesis. Catalyzes the aerobic oxidative decarboxylation of propionate groups of rings A and B of coproporphyrinogen-III to yield the vinyl groups in protoporphyrinogen-IX. The protein is Oxygen-dependent coproporphyrinogen-III oxidase of Leishmania major.